Reading from the N-terminus, the 271-residue chain is Chitinase 6 (271 aa).

The signal sequence occupies residues 1–20; it reads MARRLSLLAVVLAMVAAVSA. The Chitin-binding type-1 domain occupies 25–60; it reads AQSCGCASDQCCSKWGFCGTGSDYCGTGCQAGPCDV. 6 disulfides stabilise this stretch: C28–C36, C30–C42, C35–C49, C88–C137, C150–C159, and C239–C271. E132 acts as the Proton donor in catalysis. N268 is a glycosylation site (N-linked (GlcNAc...) asparagine).

Belongs to the glycosyl hydrolase 19 family. Chitinase class IV subfamily. As to expression, expressed in roots, leaves, sheaths and meristems.

The enzyme catalyses Random endo-hydrolysis of N-acetyl-beta-D-glucosaminide (1-&gt;4)-beta-linkages in chitin and chitodextrins.. Functionally, may function in reproductive organs during embryogenesis and seed maturation. This chain is Chitinase 6 (Cht6), found in Oryza sativa subsp. japonica (Rice).